We begin with the raw amino-acid sequence, 222 residues long: MNRSLYRTRIKFCGMTRAGDIRLAGELGVDAVGFIFAHGSPRRVAPAEARAMRQATAPMVDVVALFRNNSKEEVREVVRTVRPTLLQFHGEEDDAFCRSFNLPYLKAVPMGSSGVNGEDANARTLQLSYPNTAGFLFDSHAPGAGGGTGKTFDWSRLPTGLHRPFLLAGGINADNVFDAIVATLPWGVDVSSGVELAPGIKDGHKMRKFVEEVRRADCHDMS.

The protein belongs to the TrpF family.

It carries out the reaction N-(5-phospho-beta-D-ribosyl)anthranilate = 1-(2-carboxyphenylamino)-1-deoxy-D-ribulose 5-phosphate. It functions in the pathway amino-acid biosynthesis; L-tryptophan biosynthesis; L-tryptophan from chorismate: step 3/5. This Xanthomonas euvesicatoria pv. vesicatoria (strain 85-10) (Xanthomonas campestris pv. vesicatoria) protein is N-(5'-phosphoribosyl)anthranilate isomerase.